The primary structure comprises 208 residues: MKDPIETYMNLVPMVVEQTSRGERAYDIFSRLLKERIIFLNGPVHDGMSSLIVAQLLHLEAENPAKEISMYINSPGGVVTSGLSIYDTMQYIKPKVSTLVIGQAASMGSLLLTAGEAGMRFSLPNSRVMVHQPSGGYQGQATDIMIHAAETQKLKDRLNEIYVKHTGQTMKKVVDALERDNFMSPEEAKEFGLIDEIVENRSKDDAET.

The active-site Nucleophile is Ser106. His131 is an active-site residue.

Belongs to the peptidase S14 family. Fourteen ClpP subunits assemble into 2 heptameric rings which stack back to back to give a disk-like structure with a central cavity, resembling the structure of eukaryotic proteasomes.

It is found in the cytoplasm. It carries out the reaction Hydrolysis of proteins to small peptides in the presence of ATP and magnesium. alpha-casein is the usual test substrate. In the absence of ATP, only oligopeptides shorter than five residues are hydrolyzed (such as succinyl-Leu-Tyr-|-NHMec, and Leu-Tyr-Leu-|-Tyr-Trp, in which cleavage of the -Tyr-|-Leu- and -Tyr-|-Trp bonds also occurs).. In terms of biological role, cleaves peptides in various proteins in a process that requires ATP hydrolysis. Has a chymotrypsin-like activity. Plays a major role in the degradation of misfolded proteins. This is ATP-dependent Clp protease proteolytic subunit from Roseobacter denitrificans (strain ATCC 33942 / OCh 114) (Erythrobacter sp. (strain OCh 114)).